Consider the following 379-residue polypeptide: Cytochrome b (379 aa).

4 consecutive transmembrane segments (helical) span residues 33-53, 77-98, 113-133, and 178-198; these read FGSLLGMCLVIQILTGLFLAM, WLIRYLHANGASMFFICLFIHV, WNIGIILLLTTMATAFVGYVL, and FFAFHFILPFIIAAFALVHLL. 2 residues coordinate heme b: histidine 83 and histidine 97. Residues histidine 182 and histidine 196 each coordinate heme b. Histidine 201 lines the a ubiquinone pocket. A run of 4 helical transmembrane segments spans residues 226-246, 288-308, 320-340, and 347-367; these read IKDLLGIFLLLLVLMTLALFF, LGGVLALVLSILILAAFPLLN, VTQTIYWIFIANLLVLTWIGG, and FTTIGQIASITYFTIIIILIP.

The protein belongs to the cytochrome b family. In terms of assembly, the cytochrome bc1 complex contains 11 subunits: 3 respiratory subunits (MT-CYB, CYC1 and UQCRFS1), 2 core proteins (UQCRC1 and UQCRC2) and 6 low-molecular weight proteins (UQCRH/QCR6, UQCRB/QCR7, UQCRQ/QCR8, UQCR10/QCR9, UQCR11/QCR10 and a cleavage product of UQCRFS1). This cytochrome bc1 complex then forms a dimer. Requires heme b as cofactor.

The protein localises to the mitochondrion inner membrane. Component of the ubiquinol-cytochrome c reductase complex (complex III or cytochrome b-c1 complex) that is part of the mitochondrial respiratory chain. The b-c1 complex mediates electron transfer from ubiquinol to cytochrome c. Contributes to the generation of a proton gradient across the mitochondrial membrane that is then used for ATP synthesis. The protein is Cytochrome b (MT-CYB) of Akodon lindberghi (Lindbergh's grass mouse).